The chain runs to 480 residues: uncharacterized protein (480 aa).

The region spanning 131-207 (KKIIKIKNDV…KVVKVRFFIK (77 aa)) is the PUA domain.

It in the C-terminal section; belongs to the PAPS reductase family.

This is an uncharacterized protein from Methanocaldococcus jannaschii (strain ATCC 43067 / DSM 2661 / JAL-1 / JCM 10045 / NBRC 100440) (Methanococcus jannaschii).